The chain runs to 114 residues: DNA-directed RNA polymerases II, IV and V subunit 9A (114 aa).

Zn(2+)-binding residues include Cys-7, Cys-10, Cys-29, Cys-32, Cys-76, Cys-79, Cys-103, and Cys-108. Residues 72–113 form a TFIIS-type zinc finger; sequence KAVRCSKCQHREAVFFQATARGEEGMTLFFVCCNPNCGHRWR.

This sequence belongs to the archaeal RpoM/eukaryotic RPA12/RPB9/RPC11 RNA polymerase family. In terms of assembly, component of the RNA polymerase II, IV and V complexes. Interacts with NRPD1.

The protein localises to the nucleus. The protein resides in the nucleolus. Its function is as follows. DNA-dependent RNA polymerase catalyzes the transcription of DNA into RNA using the four ribonucleoside triphosphates as substrates. Component of RNA polymerase II which synthesizes mRNA precursors and many functional non-coding RNAs. Pol II is the central component of the basal RNA polymerase II transcription machinery. It is composed of mobile elements that move relative to each other. Component of RNA polymerases IV and V which mediate short-interfering RNAs (siRNA) accumulation and subsequent RNA-directed DNA methylation-dependent (RdDM) transcriptional gene silencing (TGS) of endogenous repeated sequences, including transposable elements. Required for RNA silencing. The chain is DNA-directed RNA polymerases II, IV and V subunit 9A (NRPB9A) from Arabidopsis thaliana (Mouse-ear cress).